The sequence spans 122 residues: Large ribosomal subunit protein uL14 (122 aa).

The protein belongs to the universal ribosomal protein uL14 family. Part of the 50S ribosomal subunit. Forms a cluster with proteins L3 and L19. In the 70S ribosome, L14 and L19 interact and together make contacts with the 16S rRNA in bridges B5 and B8.

Binds to 23S rRNA. Forms part of two intersubunit bridges in the 70S ribosome. The chain is Large ribosomal subunit protein uL14 from Maridesulfovibrio salexigens (strain ATCC 14822 / DSM 2638 / NCIMB 8403 / VKM B-1763) (Desulfovibrio salexigens).